Here is a 1240-residue protein sequence, read N- to C-terminus: ABC transporter B family member 17 (1240 aa).

In terms of domain architecture, ABC transmembrane type-1 1 spans 35–324 (MALGLIGAVG…SLSNLKYFSE (290 aa)). The helical transmembrane segment at 36–56 (ALGLIGAVGDGFITPVVVFIF) threads the bilayer. N-linked (GlcNAc...) asparagine glycosylation is present at asparagine 70. Helical transmembrane passes span 81-101 (VVALLYVACGSWVICFLEGYC), 158-180 (LPNFLMNASAFVASYIVSFILMW), 184-206 (IVGFPFIILLLVPGLMYGRALVS), 264-284 (GITIGSNGVTHAIWAFLTWYG), and 296-316 (GTVFVVISCITYGGVSLGQSL). In terms of domain architecture, ABC transporter 1 spans 359-595 (VEFNHVKFTY…IDGQYTSLVS (237 aa)). 394–401 (GGSGSGKS) lines the ATP pocket. N-linked (GlcNAc...) asparagine glycosylation is found at asparagine 542, asparagine 609, and asparagine 642. The 289-residue stretch at 672 to 960 (ALYGCLSAAL…AGTMTTDLAR (289 aa)) folds into the ABC transmembrane type-1 2 domain. The next 2 helical transmembrane spans lie at 681–701 (LVGVLQPVSAYSAGSVISVFF) and 714–734 (IYVLLFVGLAIFSFLVNISQH). Asparagine 769 is a glycosylation site (N-linked (GlcNAc...) asparagine). The next 4 membrane-spanning stretches (helical) occupy residues 793 to 815 (MSLLVQTISAVIIACIIGLVIAW), 817 to 839 (LAIVMISVQPLIVVCFYTQRVLL), 896 to 919 (WLAGIVLGTSRSLITCTSALNFWY), and 923 to 943 (LIADGKIVSKAFFEIFLIFVT). The 239-residue stretch at 995-1233 (ITFLNVDFAY…GPTGTYFSLA (239 aa)) folds into the ABC transporter 2 domain. Asparagine 1015 is a glycosylation site (N-linked (GlcNAc...) asparagine). Position 1030–1037 (1030–1037 (GTSGSGKS)) interacts with ATP.

The protein belongs to the ABC transporter superfamily. ABCB family. Multidrug resistance exporter (TC 3.A.1.201) subfamily.

Its subcellular location is the membrane. In Arabidopsis thaliana (Mouse-ear cress), this protein is ABC transporter B family member 17 (ABCB17).